The sequence spans 153 residues: Small ribosomal subunit protein uS9 (153 aa).

Residues 1–19 are compositionally biased toward low complexity; that stretch reads MTAPADEAPAVEDAPVAED. Disordered regions lie at residues 1-23 and 121-153; these read MTAP…IAPV and LKKA…YSKR. Basic and acidic residues predominate over residues 129–138; that stretch reads RDSREKERKK. A compositionally biased stretch (basic residues) spans 139–153; it reads YGLKKARKAPQYSKR.

It belongs to the universal ribosomal protein uS9 family.

The protein is Small ribosomal subunit protein uS9 of Saccharopolyspora erythraea (strain ATCC 11635 / DSM 40517 / JCM 4748 / NBRC 13426 / NCIMB 8594 / NRRL 2338).